A 193-amino-acid chain; its full sequence is Glycerol-3-phosphate acyltransferase (193 aa).

A run of 5 helical transmembrane segments spans residues 2 to 22 (AFIISIIIAYLLGSLSFAVIV), 51 to 71 (QAAFYVLLGDAAKGLIAVLIA), 78 to 98 (GVSLAFVGLVAVLGHLFPVYF), 112 to 132 (VLLGLSFWIGLFVIATWVIVV), and 154 to 174 (IIAGRTDYLFPVLIIAILIIW).

This sequence belongs to the PlsY family. In terms of assembly, probably interacts with PlsX.

It is found in the cell inner membrane. It catalyses the reaction an acyl phosphate + sn-glycerol 3-phosphate = a 1-acyl-sn-glycero-3-phosphate + phosphate. It functions in the pathway lipid metabolism; phospholipid metabolism. Its function is as follows. Catalyzes the transfer of an acyl group from acyl-phosphate (acyl-PO(4)) to glycerol-3-phosphate (G3P) to form lysophosphatidic acid (LPA). This enzyme utilizes acyl-phosphate as fatty acyl donor, but not acyl-CoA or acyl-ACP. The sequence is that of Glycerol-3-phosphate acyltransferase from Coxiella burnetii (strain CbuK_Q154) (Coxiella burnetii (strain Q154)).